The following is a 120-amino-acid chain: NAD(P)H-quinone oxidoreductase subunit 3, chloroplastic (120 aa).

3 helical membrane-spanning segments follow: residues 9–29 (IFWA…LISG), 64–84 (MFAL…PWAM), and 88–108 (VLGV…ILGL).

This sequence belongs to the complex I subunit 3 family. NDH is composed of at least 16 different subunits, 5 of which are encoded in the nucleus.

Its subcellular location is the plastid. It localises to the chloroplast thylakoid membrane. The enzyme catalyses a plastoquinone + NADH + (n+1) H(+)(in) = a plastoquinol + NAD(+) + n H(+)(out). It catalyses the reaction a plastoquinone + NADPH + (n+1) H(+)(in) = a plastoquinol + NADP(+) + n H(+)(out). NDH shuttles electrons from NAD(P)H:plastoquinone, via FMN and iron-sulfur (Fe-S) centers, to quinones in the photosynthetic chain and possibly in a chloroplast respiratory chain. The immediate electron acceptor for the enzyme in this species is believed to be plastoquinone. Couples the redox reaction to proton translocation, and thus conserves the redox energy in a proton gradient. This Draba nemorosa (Woodland whitlowgrass) protein is NAD(P)H-quinone oxidoreductase subunit 3, chloroplastic.